A 120-amino-acid polypeptide reads, in one-letter code: Hydrogenase maturation factor HypA (120 aa).

Histidine 2 serves as a coordination point for Ni(2+). Zn(2+) contacts are provided by cysteine 73, histidine 76, cysteine 89, and cysteine 92.

Belongs to the HypA/HybF family.

Functionally, involved in the maturation of [NiFe] hydrogenases. Required for nickel insertion into the metal center of the hydrogenase. The protein is Hydrogenase maturation factor HypA of Deinococcus radiodurans (strain ATCC 13939 / DSM 20539 / JCM 16871 / CCUG 27074 / LMG 4051 / NBRC 15346 / NCIMB 9279 / VKM B-1422 / R1).